Consider the following 174-residue polypeptide: NADH-quinone oxidoreductase subunit B 2 (174 aa).

[4Fe-4S] cluster-binding residues include Cys-51, Cys-52, Cys-116, and Cys-145.

It belongs to the complex I 20 kDa subunit family. In terms of assembly, NDH-1 is composed of 14 different subunits. Subunits NuoB, C, D, E, F, and G constitute the peripheral sector of the complex. [4Fe-4S] cluster serves as cofactor.

It localises to the cell inner membrane. It carries out the reaction a quinone + NADH + 5 H(+)(in) = a quinol + NAD(+) + 4 H(+)(out). In terms of biological role, NDH-1 shuttles electrons from NADH, via FMN and iron-sulfur (Fe-S) centers, to quinones in the respiratory chain. The immediate electron acceptor for the enzyme in this species is believed to be ubiquinone. Couples the redox reaction to proton translocation (for every two electrons transferred, four hydrogen ions are translocated across the cytoplasmic membrane), and thus conserves the redox energy in a proton gradient. In Thermodesulfovibrio yellowstonii (strain ATCC 51303 / DSM 11347 / YP87), this protein is NADH-quinone oxidoreductase subunit B 2.